The chain runs to 886 residues: Protein O-mannosyltransferase 1 (886 aa).

Polar residues-rich tracts occupy residues 1–10 (MSATYTNTIT) and 18–34 (VRQQ…LSGE). 2 disordered regions span residues 1-37 (MSAT…ESNE) and 88-161 (RGSV…KTAN). A compositionally biased stretch (low complexity) spans 105-139 (PTPVATPKQASPSPTSDRSRSLSRSPSPSRSRSLS). Asn-161 and Asn-242 each carry an N-linked (GlcNAc...) asparagine glycan. The next 4 membrane-spanning stretches (helical) occupy residues 256–276 (MPIF…APAV), 310–330 (VLME…LLRF), 349–369 (VCLG…GLAF), and 398–418 (LLIF…IHFK). 3 MIR domains span residues 450–511 (PLAV…VKRP), 522–579 (PDII…VEIL), and 585–642 (GDIW…VEEH). 3 helical membrane passes run 727 to 747 (ILLW…LAFY), 791 to 811 (LFLH…CFVV), and 835 to 855 (LMLI…IPFS).

Belongs to the glycosyltransferase 39 family. In terms of assembly, interacts with tw/POMT2. As to expression, at the cellular blastoderm stage, expression accumulates in the ventrally located mesoderm primordium. At germ band extension, mesoderm expression is seen as stripes of strong expression. A very strong signal is also detected in the invaginating gut. As the germ band retracts, mesodermal expression decays and becomes restricted to somatic muscle precursors. After dorsal closure, expression has disappeared from the mesoderm and remains in the endoderm. Some expression is detected in a few cells of the head and the pharyngeal muscles.

Its subcellular location is the endoplasmic reticulum membrane. It carries out the reaction a di-trans,poly-cis-dolichyl beta-D-mannosyl phosphate + L-seryl-[protein] = 3-O-(alpha-D-mannosyl)-L-seryl-[protein] + a di-trans,poly-cis-dolichyl phosphate + H(+). The enzyme catalyses a di-trans,poly-cis-dolichyl beta-D-mannosyl phosphate + L-threonyl-[protein] = 3-O-(alpha-D-mannosyl)-L-threonyl-[protein] + a di-trans,poly-cis-dolichyl phosphate + H(+). It participates in protein modification; protein glycosylation. Its function is as follows. Rt/POMT1 and tw/POMT2 function as a protein O-mannosyltransferase in association with each other to generate and maintain normal muscle development. The protein is Protein O-mannosyltransferase 1 of Drosophila melanogaster (Fruit fly).